The chain runs to 116 residues: Beta-2-microglobulin (116 aa).

Positions 1–19 are cleaved as a signal peptide; that stretch reads MRAIITFALFCVLYVTVQG. An Ig-like C1-type domain is found at 24 to 110; it reads PKVQVYSHFP…VRHMNNKNIY (87 aa). Cys-44 and Cys-99 are disulfide-bonded.

It belongs to the beta-2-microglobulin family. In terms of assembly, heterodimer of an alpha chain and a beta chain. Beta-2-microglobulin is the beta-chain of major histocompatibility complex class I molecules.

Its subcellular location is the secreted. Functionally, component of the class I major histocompatibility complex (MHC). Involved in the presentation of peptide antigens to the immune system. This Cyprinus carpio (Common carp) protein is Beta-2-microglobulin (b2m).